The sequence spans 270 residues: Putative phosphoenolpyruvate synthase regulatory protein (270 aa).

149–156 (GVSRSGKT) lines the ADP pocket.

It belongs to the pyruvate, phosphate/water dikinase regulatory protein family. PSRP subfamily.

The enzyme catalyses [pyruvate, water dikinase] + ADP = [pyruvate, water dikinase]-phosphate + AMP + H(+). It catalyses the reaction [pyruvate, water dikinase]-phosphate + phosphate + H(+) = [pyruvate, water dikinase] + diphosphate. Its function is as follows. Bifunctional serine/threonine kinase and phosphorylase involved in the regulation of the phosphoenolpyruvate synthase (PEPS) by catalyzing its phosphorylation/dephosphorylation. The polypeptide is Putative phosphoenolpyruvate synthase regulatory protein (Alteromonas mediterranea (strain DSM 17117 / CIP 110805 / LMG 28347 / Deep ecotype)).